A 176-amino-acid chain; its full sequence is Lipoprotein signal peptidase (176 aa).

4 helical membrane passes run Leu26–Val46, Val57–Ala77, Trp82–Leu102, and Phe111–Ile131. Catalysis depends on residues Asp137 and Asp155. The chain crosses the membrane as a helical span at residues His147–Val167.

The protein belongs to the peptidase A8 family.

It localises to the cell inner membrane. The catalysed reaction is Release of signal peptides from bacterial membrane prolipoproteins. Hydrolyzes -Xaa-Yaa-Zaa-|-(S,diacylglyceryl)Cys-, in which Xaa is hydrophobic (preferably Leu), and Yaa (Ala or Ser) and Zaa (Gly or Ala) have small, neutral side chains.. It participates in protein modification; lipoprotein biosynthesis (signal peptide cleavage). Its function is as follows. This protein specifically catalyzes the removal of signal peptides from prolipoproteins. The sequence is that of Lipoprotein signal peptidase from Cupriavidus taiwanensis (strain DSM 17343 / BCRC 17206 / CCUG 44338 / CIP 107171 / LMG 19424 / R1) (Ralstonia taiwanensis (strain LMG 19424)).